The primary structure comprises 146 residues: Large ribosomal subunit protein uL15 (146 aa).

The disordered stretch occupies residues 1–54; that stretch reads MTIKLHDLRPAPGSKTPRTRVGRGEGSKGKTAGRGTKGTKARKQVPTTFEGGQM.

It belongs to the universal ribosomal protein uL15 family. As to quaternary structure, part of the 50S ribosomal subunit.

Its function is as follows. Binds to the 23S rRNA. The sequence is that of Large ribosomal subunit protein uL15 from Mycobacterium ulcerans (strain Agy99).